Reading from the N-terminus, the 382-residue chain is MSTWLLPENIADVLPSEARKIEELRRRLLDRFRSYGYEMVMPPLLEYLESLLTSGGADLRLRTFKLVDQLSGRTLGLRADITPQVARIDAHLLNRQGVTRLCYAGHVMHTRPRGLHATREQIQIGAEIYGHAGLEADLEIQQLMLDALHLAGLSRIRLDLCHAGVLAALLARDTQAAARGEALYDALSGKDVPLLNELTDDLGADTRAALRALPHLYGDASVLDEARQRLPALPEIARALDDLAQLAAQAKGVEVAIDLADLRGYAYHSGAMFTAYIDGVPNAIARGGRYDHVGQAYGRARPATGFSLDLRELARISPVEARGTAILAPWAQDDALRAAVAALRDAGEVVIQALPGHDHVLDEFACDRSLVERNGAWVVEPR.

The protein belongs to the class-II aminoacyl-tRNA synthetase family. HisZ subfamily. In terms of assembly, heteromultimer composed of HisG and HisZ subunits.

It is found in the cytoplasm. The protein operates within amino-acid biosynthesis; L-histidine biosynthesis; L-histidine from 5-phospho-alpha-D-ribose 1-diphosphate: step 1/9. In terms of biological role, required for the first step of histidine biosynthesis. May allow the feedback regulation of ATP phosphoribosyltransferase activity by histidine. This chain is ATP phosphoribosyltransferase regulatory subunit, found in Burkholderia multivorans (strain ATCC 17616 / 249).